The sequence spans 66 residues: U1-theraphotoxin-Cg1b (66 aa).

The first 21 residues, Met1–Ala21, serve as a signal peptide directing secretion. The propeptide occupies Ala22–Arg29. 3 disulfides stabilise this stretch: Cys31-Cys46, Cys38-Cys51, and Cys45-Cys58.

This sequence belongs to the neurotoxin 10 (Hwtx-1) family. 46 (Jztx-7/10/12) subfamily. As to expression, expressed by the venom gland.

Its subcellular location is the secreted. Its function is as follows. Probable ion channel inhibitor. This Chilobrachys guangxiensis (Chinese earth tiger tarantula) protein is U1-theraphotoxin-Cg1b.